The sequence spans 164 residues: V-type proton ATPase 16 kDa proteolipid subunit (164 aa).

At Met1 to Thr9 the chain is on the lumenal side. A helical transmembrane segment spans residues Ala10–Gly32. Residues Thr33–Ser54 are Cytoplasmic-facing. A helical transmembrane segment spans residues Ile55 to Ile75. Topologically, residues Ser76–His94 are lumenal. A helical membrane pass occupies residues Leu95 to Gly116. The Cytoplasmic portion of the chain corresponds to Asp117–Lys128. The helical transmembrane segment at Leu129–Leu154 threads the bilayer. The Lumenal segment spans residues Ser155 to Glu164.

The protein belongs to the V-ATPase proteolipid subunit family. As to quaternary structure, V-ATPase is a heteromultimeric enzyme composed of a peripheral catalytic V1 complex (main components: subunits A, B, C, D, E, and F) attached to an integral membrane V0 proton pore complex (main component: the proteolipid protein; which is present as a hexamer that forms the proton-conducting pore).

The protein localises to the vacuole membrane. Proton-conducting pore forming subunit of the membrane integral V0 complex of vacuolar ATPase. V-ATPase is responsible for acidifying a variety of intracellular compartments in eukaryotic cells. In Solanum lycopersicum (Tomato), this protein is V-type proton ATPase 16 kDa proteolipid subunit.